Consider the following 233-residue polypeptide: Large ribosomal subunit protein uL22m (233 aa).

This sequence belongs to the universal ribosomal protein uL22 family. In terms of assembly, component of the mitochondrial ribosome large subunit (39S) which comprises a 16S rRNA and about 50 distinct proteins.

The protein localises to the mitochondrion. The sequence is that of Large ribosomal subunit protein uL22m (mRpL22) from Drosophila melanogaster (Fruit fly).